We begin with the raw amino-acid sequence, 555 residues long: 2-isopropylmalate synthase (555 aa).

A Pyruvate carboxyltransferase domain is found at 30 to 303; it reads PIWCSVDLRD…DPGLDCTDIN (274 aa). Mg(2+) is bound by residues D39, H242, H244, and N278. The segment at 437 to 555 is regulatory domain; it reads QPDARIKFVD…VSAANRVIAK (119 aa).

This sequence belongs to the alpha-IPM synthase/homocitrate synthase family. LeuA type 2 subfamily. Homodimer. Mg(2+) is required as a cofactor.

The protein localises to the cytoplasm. It catalyses the reaction 3-methyl-2-oxobutanoate + acetyl-CoA + H2O = (2S)-2-isopropylmalate + CoA + H(+). It participates in amino-acid biosynthesis; L-leucine biosynthesis; L-leucine from 3-methyl-2-oxobutanoate: step 1/4. Its function is as follows. Catalyzes the condensation of the acetyl group of acetyl-CoA with 3-methyl-2-oxobutanoate (2-ketoisovalerate) to form 3-carboxy-3-hydroxy-4-methylpentanoate (2-isopropylmalate). The chain is 2-isopropylmalate synthase from Brucella suis biovar 1 (strain 1330).